Consider the following 438-residue polypeptide: Xylose isomerase (438 aa).

Catalysis depends on residues H100 and D103. E231, E267, H270, D295, D306, D308, and D338 together coordinate Mg(2+).

It belongs to the xylose isomerase family. As to quaternary structure, homotetramer. It depends on Mg(2+) as a cofactor.

It localises to the cytoplasm. The catalysed reaction is alpha-D-xylose = alpha-D-xylulofuranose. The protein is Xylose isomerase of Pseudomonas savastanoi pv. phaseolicola (strain 1448A / Race 6) (Pseudomonas syringae pv. phaseolicola (strain 1448A / Race 6)).